The sequence spans 288 residues: MKISPLCPSCLLGRVYYEAKLVTDDEDLISQCVDESLKILAENYSSRPINAHLATRIHRRVYEILGVEDPYAEVKARANEVARQVLPLAKEIVEGSDDPFKTAVIVSIVGNNFDYGVQGHKVVEEEFRDFLKRKVQEGLKINDTERIKELSSGKVVYLTDNAGEIFFDTLLMKEIKRRCEKLTAVVRGRPIISDATIEDARLARVDKIADELLTNGKGAIGIIMDELPDETRKALEEADLIVAKGMANYECLSDGSLKPIAFLLTAKCEPVARDIGVNVGDMVAKVVE.

A Subfamily I CxxC motif motif is present at residues 7–10; it reads CPSC. Mn(2+) contacts are provided by Asp160, Asn161, and Asp194. The short motif at 247-250 is the Subfamily I GNFE-like motif element; it reads ANYE. The short motif at 267-268 is the Subfamily I KC motif element; sequence KC.

Belongs to the damage-control phosphatase family. Nucleotides phosphatase I subfamily. [2Fe-2S] cluster serves as cofactor. Requires Mn(2+) as cofactor. Ni(2+) is required as a cofactor.

Its function is as follows. Metal-dependent phosphatase with probable damage-control functions. Could hydrolyze oxidatively damaged purine nucleotides or their biosynthetic intermediates. This is Damage-control phosphatase AF_1104 from Archaeoglobus fulgidus (strain ATCC 49558 / DSM 4304 / JCM 9628 / NBRC 100126 / VC-16).